Reading from the N-terminus, the 68-residue chain is Amphipathic peptide CT1 (68 aa).

The signal sequence occupies residues 1 to 23 (MKTQIVILIVAVLFLQLVSQSDA). Residue leucine 36 is modified to Leucine amide. A propeptide spanning residues 40-68 (GLKNLDQYNDLFDGEISDADIKFLKDLMR) is cleaved from the precursor.

It belongs to the non-disulfide-bridged peptide (NDBP) superfamily. Short antimicrobial peptide (group 4) family. As to expression, expressed by the venom gland.

It localises to the secreted. Its subcellular location is the target cell membrane. Its function is as follows. Amphipathic peptide that shows no antibacterial activity even at 50 uM but shows a low hemolytic activity against human erythrocytes. The chain is Amphipathic peptide CT1 from Mesomexovis subcristatus (Scorpion).